Reading from the N-terminus, the 219-residue chain is 7-cyano-7-deazaguanine synthase (219 aa).

10–20 (FSGGQDSTTCL) contributes to the ATP binding site. Zn(2+) is bound by residues C188, C196, C199, and C202.

The protein belongs to the QueC family. Zn(2+) is required as a cofactor.

It carries out the reaction 7-carboxy-7-deazaguanine + NH4(+) + ATP = 7-cyano-7-deazaguanine + ADP + phosphate + H2O + H(+). The protein operates within purine metabolism; 7-cyano-7-deazaguanine biosynthesis. Its function is as follows. Catalyzes the ATP-dependent conversion of 7-carboxy-7-deazaguanine (CDG) to 7-cyano-7-deazaguanine (preQ(0)). The protein is 7-cyano-7-deazaguanine synthase of Neisseria meningitidis serogroup A / serotype 4A (strain DSM 15465 / Z2491).